The primary structure comprises 135 residues: L-alanine exporter AlaE (135 aa).

3 consecutive transmembrane segments (helical) span residues 9–29 (VATV…IAGM), 75–95 (DILA…LIAG), and 96–116 (ASFA…ILLA).

The protein belongs to the AlaE exporter family.

It is found in the cell inner membrane. Exports L-alanine. In Cereibacter sphaeroides (strain ATCC 17023 / DSM 158 / JCM 6121 / CCUG 31486 / LMG 2827 / NBRC 12203 / NCIMB 8253 / ATH 2.4.1.) (Rhodobacter sphaeroides), this protein is L-alanine exporter AlaE.